A 433-amino-acid polypeptide reads, in one-letter code: 3-phosphoshikimate 1-carboxyvinyltransferase (433 aa).

Residues Lys22, Ser23, and Arg27 each contribute to the 3-phosphoshikimate site. Lys22 lines the phosphoenolpyruvate pocket. 2 residues coordinate phosphoenolpyruvate: Gly95 and Arg123. 3-phosphoshikimate-binding residues include Ser167, Gln169, Asp315, and Lys342. Residue Gln169 coordinates phosphoenolpyruvate. Asp315 (proton acceptor) is an active-site residue. Phosphoenolpyruvate-binding residues include Arg346 and Arg387.

Belongs to the EPSP synthase family. Monomer.

It localises to the cytoplasm. The catalysed reaction is 3-phosphoshikimate + phosphoenolpyruvate = 5-O-(1-carboxyvinyl)-3-phosphoshikimate + phosphate. The protein operates within metabolic intermediate biosynthesis; chorismate biosynthesis; chorismate from D-erythrose 4-phosphate and phosphoenolpyruvate: step 6/7. Functionally, catalyzes the transfer of the enolpyruvyl moiety of phosphoenolpyruvate (PEP) to the 5-hydroxyl of shikimate-3-phosphate (S3P) to produce enolpyruvyl shikimate-3-phosphate and inorganic phosphate. The sequence is that of 3-phosphoshikimate 1-carboxyvinyltransferase from Legionella pneumophila (strain Lens).